Reading from the N-terminus, the 199-residue chain is dTTP/UTP pyrophosphatase (199 aa).

Aspartate 78 functions as the Proton acceptor in the catalytic mechanism.

Belongs to the Maf family. YhdE subfamily. A divalent metal cation is required as a cofactor.

The protein localises to the cytoplasm. The catalysed reaction is dTTP + H2O = dTMP + diphosphate + H(+). It carries out the reaction UTP + H2O = UMP + diphosphate + H(+). Functionally, nucleoside triphosphate pyrophosphatase that hydrolyzes dTTP and UTP. May have a dual role in cell division arrest and in preventing the incorporation of modified nucleotides into cellular nucleic acids. The polypeptide is dTTP/UTP pyrophosphatase (Clostridium acetobutylicum (strain ATCC 824 / DSM 792 / JCM 1419 / IAM 19013 / LMG 5710 / NBRC 13948 / NRRL B-527 / VKM B-1787 / 2291 / W)).